The primary structure comprises 235 residues: Motile sperm domain-containing protein 3 (235 aa).

2 disordered regions span residues 1–25 (MRRGAPQDQELVGPGPPGRGSRGAP) and 143–171 (ELQGQPDPAPRPGPPAGTPPPTARHFQEH). In terms of domain architecture, MSP spans 33–145 (PVLVFPPDLV…RAPAYPLELQ (113 aa)). Over residues 149 to 164 (DPAPRPGPPAGTPPPT) the composition is skewed to pro residues. 2 consecutive transmembrane segments (helical) span residues 180 to 200 (SFLLFLLTGIVSVAFLLLPLP) and 213 to 233 (VSLGQKLVAAYVLGLLTMVFL).

Its subcellular location is the membrane. In Homo sapiens (Human), this protein is Motile sperm domain-containing protein 3 (MOSPD3).